A 248-amino-acid polypeptide reads, in one-letter code: MADS-box transcription factor 8 (248 aa).

The 61-residue stretch at 1-61 folds into the MADS-box domain; sequence MGRGRVELKR…GKLYEFCSGQ (61 aa). Residues 90–180 enclose the K-box domain; sequence VQSSRNEYLK…RRKLEESNQL (91 aa).

In terms of assembly, may interact with the K-box of MADS6 and MADS16. May interact with MADS13 and MADS18. Binds to FCA. As to expression, expressed in lodicules, stamens and carpels.

It localises to the nucleus. Probable transcription factor. May be involved in the control of flowering time. In Oryza sativa subsp. japonica (Rice), this protein is MADS-box transcription factor 8 (MADS8).